The primary structure comprises 157 residues: Large ribosomal subunit protein uL10 (157 aa).

Belongs to the universal ribosomal protein uL10 family. As to quaternary structure, part of the ribosomal stalk of the 50S ribosomal subunit. The N-terminus interacts with L11 and the large rRNA to form the base of the stalk. The C-terminus forms an elongated spine to which L12 dimers bind in a sequential fashion forming a multimeric L10(L12)X complex.

Forms part of the ribosomal stalk, playing a central role in the interaction of the ribosome with GTP-bound translation factors. The polypeptide is Large ribosomal subunit protein uL10 (Campylobacter hominis (strain ATCC BAA-381 / DSM 21671 / CCUG 45161 / LMG 19568 / NCTC 13146 / CH001A)).